The sequence spans 379 residues: Muconate cycloisomerase 1-1 (379 aa).

The active site involves K169. Mn(2+)-binding residues include D198, E224, and D247.

The protein belongs to the mandelate racemase/muconate lactonizing enzyme family. In terms of assembly, homooctamer. Mn(2+) is required as a cofactor.

The enzyme catalyses (S)-muconolactone = cis,cis-muconate + H(+). It functions in the pathway aromatic compound metabolism; beta-ketoadipate pathway; 5-oxo-4,5-dihydro-2-furylacetate from catechol: step 2/3. Functionally, catalyzes a syn cycloisomerization. The chain is Muconate cycloisomerase 1-1 (catB1) from Acinetobacter lwoffii.